We begin with the raw amino-acid sequence, 471 residues long: Probable multidrug-efflux transporter MT1670 (471 aa).

Transmembrane regions (helical) follow at residues 23–43, 55–75, 91–111, 116–136, 146–166, 174–194, 213–233, 237–257, 279–299, 308–328, 337–357, 366–386, 410–430, and 438–458; these read IVLAGGVALYATNEFLTISLL, LYAWVTTLYLVGSVVAATTVN, LAVFGLASLVCAAAPSMQILV, LQGIAGGLLAGLGYALINSTL, ALVSAMWGVATLIGPATGGLF, WAFGVMTLLTALMAMLVPVAL, VPVWSLLLMGAAALAISVAAL, LVQTAGLLAAAALLVAVFVVV, IYLTMSVQMIAAMVDTYVPLF, PVAAGFLGAALAVGWTVGEVA, VIGHVVAAAPLVMASGLALGA, VGIIALWALALLIIGTGIGIA, AINVVQLISGAFGAGLAGVVV, and VAAARGLYMAFTVLAAAGVIA.

Belongs to the major facilitator superfamily.

The protein localises to the cell membrane. Functionally, could be involved in fluoroquinolones efflux. This is Probable multidrug-efflux transporter MT1670 from Mycobacterium tuberculosis (strain CDC 1551 / Oshkosh).